We begin with the raw amino-acid sequence, 495 residues long: Muscle LIM protein Mlp84B (495 aa).

The region spanning 12–63 (CPRCGKSVYAAEERLAGGYVFHKNCFKCGMCNKSLDSTNCTEHERELYCKTC) is the LIM zinc-binding 1 domain. The short motif at 66–71 (RKFGPK) is the Nuclear localization signal element. In terms of domain architecture, LIM zinc-binding 2 spans 120-172 (CPRCGGYVYAAEQMLARGRSWHKECFKCGTCKKGLDSILCCEAPDKNIYCKGC). The Nuclear localization signal motif lies at 175 to 180 (KKFGPK). 3 LIM zinc-binding domains span residues 222-274 (CPRC…CRTC), 325-377 (CPRC…CRAC), and 421-473 (CPRC…CRAC).

As to expression, in the embryo, expression is restricted to the somatic, visceral, and pharyngeal muscles. Within the somatic musculature, expression is localized at the ends of muscles fibers at the point of attachment to the epidermis (at protein level). There is no expression in cardiac mesoderm or in fat body.

The protein resides in the cytoplasm. It is found in the nucleus. Plays a role in cell differentiation late in myogenesis. Transcription factor Mef2 is essential for expression. This chain is Muscle LIM protein Mlp84B, found in Drosophila melanogaster (Fruit fly).